The following is a 345-amino-acid chain: Ferrochelatase (345 aa).

Fe cation is bound by residues His215 and Glu296.

It belongs to the ferrochelatase family.

It localises to the cytoplasm. It carries out the reaction heme b + 2 H(+) = protoporphyrin IX + Fe(2+). It functions in the pathway porphyrin-containing compound metabolism; protoheme biosynthesis; protoheme from protoporphyrin-IX: step 1/1. Functionally, catalyzes the ferrous insertion into protoporphyrin IX. The sequence is that of Ferrochelatase from Rhodopseudomonas palustris (strain BisB5).